The chain runs to 212 residues: MEKFMLGRKIGMTQVFDEDGLLIPVTVIEAGPITVVQKKKPETDGYNSVRVAFGDVQEKRLNKPEKGLFAKLGIAPKKYIREFRVDDPDKYELKQEIKVEEMFQPGDRVDVTGISKGKGFAGVIKRFGNRRGKETHGSMYHRRVGSMGANTNPARVFKGKKLPGHMGVERVTVQNLDVVKVDAERNLMLVKGAVPGAKGGLLMIKDTVKARK.

The protein belongs to the universal ribosomal protein uL3 family. As to quaternary structure, part of the 50S ribosomal subunit. Forms a cluster with proteins L14 and L19.

Functionally, one of the primary rRNA binding proteins, it binds directly near the 3'-end of the 23S rRNA, where it nucleates assembly of the 50S subunit. The chain is Large ribosomal subunit protein uL3 from Acetivibrio thermocellus (strain ATCC 27405 / DSM 1237 / JCM 9322 / NBRC 103400 / NCIMB 10682 / NRRL B-4536 / VPI 7372) (Clostridium thermocellum).